The primary structure comprises 305 residues: UDP-3-O-acyl-N-acetylglucosamine deacetylase (305 aa).

Histidine 77, histidine 234, and aspartate 238 together coordinate Zn(2+). The Proton donor role is filled by histidine 261.

It belongs to the LpxC family. The cofactor is Zn(2+).

It catalyses the reaction a UDP-3-O-[(3R)-3-hydroxyacyl]-N-acetyl-alpha-D-glucosamine + H2O = a UDP-3-O-[(3R)-3-hydroxyacyl]-alpha-D-glucosamine + acetate. It participates in glycolipid biosynthesis; lipid IV(A) biosynthesis; lipid IV(A) from (3R)-3-hydroxytetradecanoyl-[acyl-carrier-protein] and UDP-N-acetyl-alpha-D-glucosamine: step 2/6. Catalyzes the hydrolysis of UDP-3-O-myristoyl-N-acetylglucosamine to form UDP-3-O-myristoylglucosamine and acetate, the committed step in lipid A biosynthesis. The protein is UDP-3-O-acyl-N-acetylglucosamine deacetylase of Oleidesulfovibrio alaskensis (strain ATCC BAA-1058 / DSM 17464 / G20) (Desulfovibrio alaskensis).